The following is a 418-amino-acid chain: AP-3 complex subunit mu-1 (418 aa).

The region spanning 176-417 (NNEAYFDVVE…VTKAGKFQVR (242 aa)) is the MHD domain.

The protein belongs to the adaptor complexes medium subunit family. Adaptor protein complex 3 (AP-3) is a heterotetramer composed of two large adaptins (delta-type subunit AP3D1 and beta-type subunit AP3B1 or AP3B2), a medium adaptin (mu-type subunit AP3M1 or AP3M2) and a small adaptin (sigma-type subunit APS1 or AP3S2). Interacts with AGAP1. AP-3 associates with the BLOC-1 complex. In terms of assembly, (Microbial infection) Interacts with human respiratory virus (HRSV) matrix protein; this interaction plays an essential role in trafficking the matrix protein in host cells.

The protein resides in the golgi apparatus. It localises to the cytoplasmic vesicle membrane. Its function is as follows. Part of the AP-3 complex, an adaptor-related complex which is not clathrin-associated. The complex is associated with the Golgi region as well as more peripheral structures. It facilitates the budding of vesicles from the Golgi membrane and may be directly involved in trafficking to lysosomes. In concert with the BLOC-1 complex, AP-3 is required to target cargos into vesicles assembled at cell bodies for delivery into neurites and nerve terminals. This is AP-3 complex subunit mu-1 (AP3M1) from Homo sapiens (Human).